The following is a 205-amino-acid chain: Glycerol-3-phosphate acyltransferase (205 aa).

Transmembrane regions (helical) follow at residues 4 to 24 (IAPGLVLLAYLCGSISSAILV), 80 to 100 (PFWLGLVAIAACVGHIWPVFF), 107 to 127 (GVATAFGAIAPIGLDLTGVMA), 130 to 150 (WLLTILLSGYSSLGAIVSALI), and 155 to 175 (VWWFKPQYTFPVSMLSCLILL).

The protein belongs to the PlsY family. Probably interacts with PlsX.

The protein localises to the cell inner membrane. It catalyses the reaction an acyl phosphate + sn-glycerol 3-phosphate = a 1-acyl-sn-glycero-3-phosphate + phosphate. It functions in the pathway lipid metabolism; phospholipid metabolism. Functionally, catalyzes the transfer of an acyl group from acyl-phosphate (acyl-PO(4)) to glycerol-3-phosphate (G3P) to form lysophosphatidic acid (LPA). This enzyme utilizes acyl-phosphate as fatty acyl donor, but not acyl-CoA or acyl-ACP. The chain is Glycerol-3-phosphate acyltransferase from Klebsiella pneumoniae subsp. pneumoniae (strain ATCC 700721 / MGH 78578).